A 429-amino-acid chain; its full sequence is High mobility group nucleosome-binding domain-containing protein 5 (429 aa).

Residues 1–429 form a disordered region; sequence MPKRKAAGDA…GEKGEPVSTV (429 aa). Thr-29 carries the post-translational modification Phosphothreonine. Over residues 35-44 the composition is skewed to basic residues; that stretch reads KRASTSRKTK. Lys-64 is covalently cross-linked (Glycyl lysine isopeptide (Lys-Gly) (interchain with G-Cter in SUMO2)). The residue at position 90 (Ser-90) is a Phosphoserine. 2 stretches are compositionally biased toward basic and acidic residues: residues 92–101 and 109–124; these read METEEVKEQI and GGEK…KNDE. Lys-98 is covalently cross-linked (Glycyl lysine isopeptide (Lys-Gly) (interchain with G-Cter in SUMO1); alternate). Lys-98 is covalently cross-linked (Glycyl lysine isopeptide (Lys-Gly) (interchain with G-Cter in SUMO2); alternate). Lys-121 is covalently cross-linked (Glycyl lysine isopeptide (Lys-Gly) (interchain with G-Cter in SUMO2)). A compositionally biased stretch (acidic residues) spans 133–152; the sequence is EKDEDEKEHEDTGEEGEDGE. The span at 153-195 shows a compositional bias: basic and acidic residues; the sequence is REGGLKEKPDVAEIEDAKEAKDDEEKEDKEKEDDKGGDGKKEE. A compositionally biased stretch (acidic residues) spans 196–209; the sequence is EKDDEGEAETEEEV. Basic and acidic residues-rich tracts occupy residues 210–387 and 413–429; these read KEQQ…NEDR and NKDF…VSTV.

It belongs to the HMGN family. As to expression, expressed in trophoblast giant cells.

The protein resides in the nucleus. Functionally, preferentially binds to euchromatin and modulates cellular transcription by counteracting linker histone-mediated chromatin compaction. This Rattus norvegicus (Rat) protein is High mobility group nucleosome-binding domain-containing protein 5.